The sequence spans 457 residues: Multidrug resistance protein MdtK (457 aa).

12 helical membrane-spanning segments follow: residues 11 to 31 (LLALGIPVIIAQFSQTAMGVV), 53 to 73 (IWLPTILLGQGILMALTPIVA), 93 to 113 (WLATFLSIMVIAILYNSRFII), 127 to 147 (AIGFIHAIMWGAPGCLYYQVL), 160 to 180 (GMIIGFIGLLINIPVNYAFIY), 188 to 208 (LGGIGCGVATASVFWAMFLMM), 243 to 263 (LPVGLALFFEVTLFAVVALLV), 276 to 296 (IALNFSSLMFMFPLSLGIAAT), 316 to 336 (ITALAVGLMLASCTAIFSIIF), 357 to 377 (LMLFAALYQLSDSVQVIGSGV), 387 to 407 (IFFITFIAYWVIGLPSGYLLG), and 416 to 436 (MGPAGFWIGFILGLTASAIMM).

The protein belongs to the multi antimicrobial extrusion (MATE) (TC 2.A.66.1) family. MdtK subfamily.

It localises to the cell inner membrane. Its function is as follows. Multidrug efflux pump that functions probably as a Na(+)/drug antiporter. The protein is Multidrug resistance protein MdtK of Proteus mirabilis (strain HI4320).